The following is a 329-amino-acid chain: Glucokinase (329 aa).

13 to 18 (GDIGGT) contributes to the ATP binding site.

It belongs to the bacterial glucokinase family.

Its subcellular location is the cytoplasm. The catalysed reaction is D-glucose + ATP = D-glucose 6-phosphate + ADP + H(+). This Caulobacter sp. (strain K31) protein is Glucokinase.